The sequence spans 442 residues: tRNA modification GTPase MnmE (442 aa).

The (6S)-5-formyl-5,6,7,8-tetrahydrofolate site is built by arginine 27, glutamate 84, and lysine 124. Residues 221–366 (GLHVVIVGAP…LLDALQAFAE (146 aa)) form the TrmE-type G domain. Residues 231 to 236 (NAGKSS), 250 to 256 (SEEAGTT), and 275 to 278 (DTAG) each bind GTP. Positions 235 and 256 each coordinate Mg(2+). Lysine 442 contributes to the (6S)-5-formyl-5,6,7,8-tetrahydrofolate binding site.

The protein belongs to the TRAFAC class TrmE-Era-EngA-EngB-Septin-like GTPase superfamily. TrmE GTPase family. Homodimer. Heterotetramer of two MnmE and two MnmG subunits. It depends on K(+) as a cofactor.

Its subcellular location is the cytoplasm. Its function is as follows. Exhibits a very high intrinsic GTPase hydrolysis rate. Involved in the addition of a carboxymethylaminomethyl (cmnm) group at the wobble position (U34) of certain tRNAs, forming tRNA-cmnm(5)s(2)U34. The sequence is that of tRNA modification GTPase MnmE from Brucella ovis (strain ATCC 25840 / 63/290 / NCTC 10512).